The sequence spans 415 residues: Phosphoglycerate kinase (415 aa).

Residues 24–26 (DLN), Arg-43, 66–69 (HLGR), Arg-125, and Arg-165 each bind substrate. Residues Lys-215, Gly-303, Glu-334, and 363 to 366 (GGDS) each bind ATP.

Belongs to the phosphoglycerate kinase family. Monomer.

It is found in the cytoplasm. It catalyses the reaction (2R)-3-phosphoglycerate + ATP = (2R)-3-phospho-glyceroyl phosphate + ADP. Its pathway is carbohydrate degradation; glycolysis; pyruvate from D-glyceraldehyde 3-phosphate: step 2/5. The sequence is that of Phosphoglycerate kinase from Mycobacterium avium (strain 104).